A 526-amino-acid chain; its full sequence is Glucomannan 4-beta-mannosyltransferase 1 (526 aa).

A helical membrane pass occupies residues 31–51 (VIIPLLKLAVIVCSVMSIMLF). Residue Asp-130 is part of the active site. Substrate contacts are provided by Asp-189 and Asp-191. Residue Asp-283 is part of the active site. The next 4 membrane-spanning stretches (helical) occupy residues 362-382 (IVAH…CVIV), 399-419 (ITIL…LWIL), 477-497 (PLEI…LLFG), and 501-521 (FFVY…GLVG).

This sequence belongs to the glycosyltransferase 2 family. Plant cellulose synthase-like A subfamily.

It is found in the golgi apparatus membrane. It carries out the reaction GDP-mannose + (glucomannan)n = GDP + (glucomannan)n+1.. Possesses 4-beta-mannosyltransferase activity on mannan using GDP-mannose. The beta-1,4-mannan product is the backbone for galactomannan synthesis by galactomannan galactosyltransferase. The galactomannan is a hemicellulosic storage polysaccharide accumulated in the form of secondary wall thickenings in the seed endosperm. This chain is Glucomannan 4-beta-mannosyltransferase 1, found in Cyamopsis tetragonoloba (Guar).